A 146-amino-acid polypeptide reads, in one-letter code: Hemoglobin subunit beta (146 aa).

Val1 is modified (N-acetylvaline). Residues 2-146 (HLTPEEKTAV…VANALAHKYH (145 aa)) form the Globin domain. A Phosphothreonine modification is found at Thr12. Ser44 carries the post-translational modification Phosphoserine. Position 59 is an N6-acetyllysine (Lys59). His63 lines the heme b pocket. At Lys82 the chain carries N6-acetyllysine. His92 provides a ligand contact to heme b. Cys93 carries the S-nitrosocysteine modification. Lys144 carries the post-translational modification N6-acetyllysine.

This sequence belongs to the globin family. Heterotetramer of two alpha chains and two beta chains. In terms of tissue distribution, red blood cells.

Involved in oxygen transport from the lung to the various peripheral tissues. In Mandrillus sphinx (Mandrill), this protein is Hemoglobin subunit beta (HBB).